Consider the following 62-residue polypeptide: uncharacterized protein (62 aa).

2 helical membrane passes run 9 to 29 (HNELLEFFHLFVTIQWLALIG) and 42 to 62 (AAVVGFFIRFTFGTPIFLQLL).

It is found in the membrane. This is an uncharacterized protein from Saccharomyces cerevisiae (strain ATCC 204508 / S288c) (Baker's yeast).